Here is a 378-residue protein sequence, read N- to C-terminus: GDP-mannose-dependent alpha-mannosyltransferase (378 aa).

It belongs to the glycosyltransferase group 1 family. Glycosyltransferase 4 subfamily.

Its pathway is phospholipid metabolism; phosphatidylinositol metabolism. Its function is as follows. Catalyzes the addition of a mannose residue from GDP-D-mannose to GlcAGroAc2 to generate 1,2-di-O-C16/C18:1-(alpha-D-mannopyranosyl)-(1-4)-(alpha-D-glucopyranosyluronic acid)-(1-3)-glycerol(ManGlcAGroAc2). This chain is GDP-mannose-dependent alpha-mannosyltransferase (mgtA), found in Mycobacterium tuberculosis (strain CDC 1551 / Oshkosh).